The chain runs to 357 residues: Protein XRP2 (357 aa).

Residues 1–11 show a composition bias toward basic residues; the sequence is MGCFFSKRRKP. Residues 1–39 form a disordered region; the sequence is MGCFFSKRRKPAQGGQQQGASQEPAAGEEKAPQYSWDQR. Residue glycine 2 is the site of N-myristoyl glycine attachment. Cysteine 3 carries S-palmitoyl cysteine lipidation. The segment covering 12–25 has biased composition (low complexity); it reads AQGGQQQGASQEPA. Residues 32–186 enclose the C-CAP/cofactor C-like domain; that stretch reads PQYSWDQRAK…TWSNIHDFTP (155 aa). GTP is bound by residues 105-106 and 122-125; these read GS and QQFR.

Belongs to the TBCC family. Post-translationally, myristoylated on Gly-2; which may be required for membrane targeting. In terms of processing, palmitoylated on Cys-3; which may be required for plasma membrane targeting.

It is found in the cell membrane. Its function is as follows. Acts as a GTPase-activating protein (GAP) for tubulin in concert with tubulin-specific chaperone C, but does not enhance tubulin heterodimerization. Acts as a GTPase-activating protein. May act as guanine nucleotide dissociation inhibitor towards ADP-ribosylation factor-like proteins. This Gallus gallus (Chicken) protein is Protein XRP2 (RP2).